The primary structure comprises 463 residues: Bifunctional protein HldE (463 aa).

The tract at residues 1–315 (MKKILVIGDL…LILNQTHPKI (315 aa)) is ribokinase. Position 191-194 (191-194 (NRAE)) interacts with ATP. D260 is a catalytic residue. The interval 334 to 463 (FTNGCFDILH…IEKIKRTHND (130 aa)) is cytidylyltransferase.

It in the N-terminal section; belongs to the carbohydrate kinase PfkB family. The protein in the C-terminal section; belongs to the cytidylyltransferase family. In terms of assembly, homodimer.

The catalysed reaction is D-glycero-beta-D-manno-heptose 7-phosphate + ATP = D-glycero-beta-D-manno-heptose 1,7-bisphosphate + ADP + H(+). The enzyme catalyses D-glycero-beta-D-manno-heptose 1-phosphate + ATP + H(+) = ADP-D-glycero-beta-D-manno-heptose + diphosphate. It participates in nucleotide-sugar biosynthesis; ADP-L-glycero-beta-D-manno-heptose biosynthesis; ADP-L-glycero-beta-D-manno-heptose from D-glycero-beta-D-manno-heptose 7-phosphate: step 1/4. It functions in the pathway nucleotide-sugar biosynthesis; ADP-L-glycero-beta-D-manno-heptose biosynthesis; ADP-L-glycero-beta-D-manno-heptose from D-glycero-beta-D-manno-heptose 7-phosphate: step 3/4. Its pathway is bacterial outer membrane biogenesis; LPS core biosynthesis. Functionally, catalyzes the phosphorylation of D-glycero-D-manno-heptose 7-phosphate at the C-1 position to selectively form D-glycero-beta-D-manno-heptose-1,7-bisphosphate. Catalyzes the ADP transfer from ATP to D-glycero-beta-D-manno-heptose 1-phosphate, yielding ADP-D-glycero-beta-D-manno-heptose. The sequence is that of Bifunctional protein HldE from Helicobacter pylori (strain J99 / ATCC 700824) (Campylobacter pylori J99).